A 602-amino-acid polypeptide reads, in one-letter code: Elongation factor 4 (602 aa).

Residues 2–184 (NHIRNFSIIA…AVVAKVPPPK (183 aa)) form the tr-type G domain. GTP contacts are provided by residues 14–19 (DHGKST) and 131–134 (NKMD).

This sequence belongs to the TRAFAC class translation factor GTPase superfamily. Classic translation factor GTPase family. LepA subfamily.

The protein localises to the cell inner membrane. It carries out the reaction GTP + H2O = GDP + phosphate + H(+). In terms of biological role, required for accurate and efficient protein synthesis under certain stress conditions. May act as a fidelity factor of the translation reaction, by catalyzing a one-codon backward translocation of tRNAs on improperly translocated ribosomes. Back-translocation proceeds from a post-translocation (POST) complex to a pre-translocation (PRE) complex, thus giving elongation factor G a second chance to translocate the tRNAs correctly. Binds to ribosomes in a GTP-dependent manner. This chain is Elongation factor 4, found in Delftia acidovorans (strain DSM 14801 / SPH-1).